Reading from the N-terminus, the 113-residue chain is Large ribosomal subunit protein uL22 (113 aa).

Belongs to the universal ribosomal protein uL22 family. In terms of assembly, part of the 50S ribosomal subunit.

In terms of biological role, this protein binds specifically to 23S rRNA; its binding is stimulated by other ribosomal proteins, e.g. L4, L17, and L20. It is important during the early stages of 50S assembly. It makes multiple contacts with different domains of the 23S rRNA in the assembled 50S subunit and ribosome. Its function is as follows. The globular domain of the protein is located near the polypeptide exit tunnel on the outside of the subunit, while an extended beta-hairpin is found that lines the wall of the exit tunnel in the center of the 70S ribosome. This Chloroflexus aggregans (strain MD-66 / DSM 9485) protein is Large ribosomal subunit protein uL22.